A 427-amino-acid chain; its full sequence is Histidine--tRNA ligase (427 aa).

It belongs to the class-II aminoacyl-tRNA synthetase family. Homodimer.

Its subcellular location is the cytoplasm. It catalyses the reaction tRNA(His) + L-histidine + ATP = L-histidyl-tRNA(His) + AMP + diphosphate + H(+). This chain is Histidine--tRNA ligase, found in Alteromonas mediterranea (strain DSM 17117 / CIP 110805 / LMG 28347 / Deep ecotype).